Here is a 466-residue protein sequence, read N- to C-terminus: MDKKQVTDLRSELLDSRFGAKSISTIAESKRFPLHEMRDDVAFQIINDELYLDGNARQNLATFCQTWDDDNVHKLMDLSINKNWIDKEEYPQSAAIDLRCVNMVADLWHAPAPKNGQAVGTNTIGSSEACMLGGMAMKWRWRKRMEAAGKPTNKPNLVCGPVQICWHKFARYWDVELREIPMRPGQLFMDPKRMIEACDENTIGVVPTFGVTYTGNYEFPQPLHDALDKFQADTGIDIDMHIDAASGGFLAPFVAPDIVWDFRLPRVKSISASGHKFGLAPLGCGWVIWRDEEALPQELVFNVDYLGGQIGTFAINFSRPAGQVIAQYYEFLRLGREGYTKVQNASYQVAAYLADEIAKLGPYEFICTGRPDEGIPAVCFKLKDGEDPGYTLYDLSERLRLRGWQVPAFTLGGEATDIVVMRIMCRRGFEMDFAELLLEDYKASLKYLSDHPKLQGIAQQNSFKHT.

2 residues coordinate substrate: T62 and N83. Residues 126-127 (SS), T212, and H275 each bind pyridoxal 5'-phosphate. K276 is subject to N6-(pyridoxal phosphate)lysine. N6-acetyllysine occurs at positions 446, 453, and 464.

The protein belongs to the group II decarboxylase family. Homohexamer composed of three dimers. The cofactor is pyridoxal 5'-phosphate.

The catalysed reaction is L-glutamate + H(+) = 4-aminobutanoate + CO2. Converts glutamate to gamma-aminobutyrate (GABA), consuming one intracellular proton in the reaction. The gad system helps to maintain a near-neutral intracellular pH when cells are exposed to extremely acidic conditions. The ability to survive transit through the acidic conditions of the stomach is essential for successful colonization of the mammalian host by commensal and pathogenic bacteria. This chain is Glutamate decarboxylase beta (gadB), found in Escherichia coli O6:H1 (strain CFT073 / ATCC 700928 / UPEC).